The primary structure comprises 261 residues: SURF1-like protein (261 aa).

The next 2 membrane-spanning stretches (helical) occupy residues 17–37 (LYWA…WQIF) and 223–243 (LSYI…WVFL).

It belongs to the SURF1 family.

It is found in the mitochondrion inner membrane. Functionally, probably involved in the biogenesis of the COX complex. The polypeptide is SURF1-like protein (Monosiga brevicollis (Choanoflagellate)).